We begin with the raw amino-acid sequence, 283 residues long: Nucleotide-binding protein ABBFA_002973 (283 aa).

An ATP-binding site is contributed by 9 to 16 (GQSGSGKS). 59–62 (DVRS) lines the GTP pocket.

Belongs to the RapZ-like family.

Functionally, displays ATPase and GTPase activities. This chain is Nucleotide-binding protein ABBFA_002973, found in Acinetobacter baumannii (strain AB307-0294).